The sequence spans 252 residues: Probable transcriptional regulatory protein all4276 (252 aa).

This sequence belongs to the TACO1 family.

It localises to the cytoplasm. The protein is Probable transcriptional regulatory protein all4276 of Nostoc sp. (strain PCC 7120 / SAG 25.82 / UTEX 2576).